Consider the following 455-residue polypeptide: Probable 1,4-beta-D-glucan cellobiohydrolase A (455 aa).

The first 17 residues, 1 to 17, serve as a signal peptide directing secretion; it reads MHQRALLFSAFWTAVQA. A glycan (N-linked (GlcNAc...) asparagine) is linked at asparagine 81. Glutamate 227 (nucleophile) is an active-site residue. Catalysis depends on glutamate 232, which acts as the Proton donor. Asparagine 285 carries N-linked (GlcNAc...) asparagine glycosylation.

The protein belongs to the glycosyl hydrolase 7 (cellulase C) family.

The protein resides in the secreted. It carries out the reaction Hydrolysis of (1-&gt;4)-beta-D-glucosidic linkages in cellulose and cellotetraose, releasing cellobiose from the non-reducing ends of the chains.. The biological conversion of cellulose to glucose generally requires three types of hydrolytic enzymes: (1) Endoglucanases which cut internal beta-1,4-glucosidic bonds; (2) Exocellobiohydrolases that cut the disaccharide cellobiose from the non-reducing end of the cellulose polymer chain; (3) Beta-1,4-glucosidases which hydrolyze the cellobiose and other short cello-oligosaccharides to glucose. The protein is Probable 1,4-beta-D-glucan cellobiohydrolase A (cbhA) of Aspergillus flavus (strain ATCC 200026 / FGSC A1120 / IAM 13836 / NRRL 3357 / JCM 12722 / SRRC 167).